The chain runs to 93 residues: Small integral membrane protein 36 (93 aa).

Residues 14–34 (LIILVASYVILLLVFLISCVL) form a helical membrane-spanning segment. The tract at residues 73–93 (PKGPGLSLGDPAPLGKKSTMV) is disordered.

The protein localises to the membrane. The chain is Small integral membrane protein 36 from Homo sapiens (Human).